A 44-amino-acid chain; its full sequence is Small ribosomal subunit protein eS31 (44 aa).

Cys-18, Cys-21, Cys-35, and Cys-38 together coordinate Zn(2+). Residues 18–38 (CPRCGDTVLAEHEDRQHCGKC) form a C4-type zinc finger.

It belongs to the eukaryotic ribosomal protein eS31 family. Part of the 30S ribosomal subunit. Requires Zn(2+) as cofactor.

This is Small ribosomal subunit protein eS31 from Haloarcula marismortui (strain ATCC 43049 / DSM 3752 / JCM 8966 / VKM B-1809) (Halobacterium marismortui).